The sequence spans 104 residues: Large ribosomal subunit protein bL21 (104 aa).

Over residues 81-90 the composition is skewed to basic residues; sequence QGYRRHHGHR. The interval 81-104 is disordered; it reads QGYRRHHGHRQPYTQVKITGISAG.

It belongs to the bacterial ribosomal protein bL21 family. As to quaternary structure, part of the 50S ribosomal subunit. Contacts protein L20.

Its function is as follows. This protein binds to 23S rRNA in the presence of protein L20. The protein is Large ribosomal subunit protein bL21 of Halorhodospira halophila (strain DSM 244 / SL1) (Ectothiorhodospira halophila (strain DSM 244 / SL1)).